We begin with the raw amino-acid sequence, 805 residues long: MSFNHREIEQKWQDYWEKNKTFRTPDDDDKPKFYVLDMFPYPSGAGLHVGHPEGYTATDILARMKRMQGYNVLHPMGWDAFGLPAEQYALDTGNDPAEFTQKNIDNFRRQIKSLGFSYDWDREINTTDPNYYKWTQWIFLKLYEKGLAYMDEVPVNWCPALGTVLANEEVINGRSERGGHPVIRKPMRQWMLKITAYADRLLEDLEELDWPESIKEMQRNWIGRSEGAEIEFAVHGHDETFTVFTTRPDTLFGATYTVLAPEHPLVEKITTPEQKPAVDAYLKEIQSKSDLERTDLAKEKTGVFTGAYAIHPVTGDRLPIWIADYVLMSYGTGAIMAVPAHDERDYEFAKKFHLPMKEVVAGGDIEKEPYTGDGEHINSEFLNGLNKQEAIDKMIAWLEEHGKGRKKVSYRLRDWLFSRQRYWGEPIPIIHWEDGTMTPVPEEELPLVLPKTDEIRPSGTGESPLANIEEWVNVVDPKTGKKGRRETNTMPQWAGSCWYYLRYIDPHNDKQLADPEKLKKWLPVDVYIGGAEHAVLHLLYARFWHKFLYDLGIVPTKEPFQKLFNQGMILGENNEKMSKSKGNVVNPDDIIESHGADTLRLYEMFMGPLEASIAWSTKGLDGARRFLDRVWRLFVTENGELNPNIVDEPANDTLERIYHQTVKKVTEDYESLRFNTAISQLMVFINEAYKAEQMKKEYMEGFVKLLSPVCPHIGEELWQKLGHTDTIAYEPWPTYDETKLVEDVVEIVVQINGKVRSRLHVPVDLPKEALEERALADEKIKEQLEGKTVRKVIAVPGKLVNIVAN.

Positions 40-51 match the 'HIGH' region motif; it reads PYPSGAGLHVGH. Positions 576–580 match the 'KMSKS' region motif; sequence KMSKS. Lys-579 provides a ligand contact to ATP.

This sequence belongs to the class-I aminoacyl-tRNA synthetase family.

The protein resides in the cytoplasm. The catalysed reaction is tRNA(Leu) + L-leucine + ATP = L-leucyl-tRNA(Leu) + AMP + diphosphate. The sequence is that of Leucine--tRNA ligase from Geobacillus kaustophilus (strain HTA426).